Here is a 31-residue protein sequence, read N- to C-terminus: Photosystem II reaction center protein T (31 aa).

Residues 3–23 (AFTYTLLMTLGVVTLFFAVAF) traverse the membrane as a helical segment.

It belongs to the PsbT family. In terms of assembly, PSII is composed of 1 copy each of membrane proteins PsbA, PsbB, PsbC, PsbD, PsbE, PsbF, PsbH, PsbI, PsbJ, PsbK, PsbL, PsbM, PsbT, PsbX, PsbY, Psb30/Ycf12, peripheral proteins PsbO, CyanoQ (PsbQ), PsbU, PsbV and a large number of cofactors. It forms dimeric complexes.

The protein resides in the cellular thylakoid membrane. Functionally, found at the monomer-monomer interface of the photosystem II (PS II) dimer, plays a role in assembly and dimerization of PSII. PSII is a light-driven water plastoquinone oxidoreductase, using light energy to abstract electrons from H(2)O, generating a proton gradient subsequently used for ATP formation. The sequence is that of Photosystem II reaction center protein T from Prochlorococcus marinus (strain SARG / CCMP1375 / SS120).